The primary structure comprises 134 residues: Large ribosomal subunit protein uL22 (134 aa).

This sequence belongs to the universal ribosomal protein uL22 family. As to quaternary structure, part of the 50S ribosomal subunit. Contacts protein L32.

This protein binds specifically to 23S rRNA; its binding is stimulated by other ribosomal proteins, e.g. L4, L17, and L20. It is important during the early stages of 50S assembly. It makes multiple contacts with different domains of the 23S rRNA in the assembled 50S subunit and ribosome. Functionally, the globular domain of the protein is located by the polypeptide exit tunnel on the outside of the subunit while an extended beta-hairpin forms part of the wall of the tunnel. Forms a pair of 'tweezers' with L32 that hold together two different domains of the 23S rRNA. Interacts with the tunnel-blocking modified macrolide azithromycin. Upon binding of the macrolide troleadomycin to the ribosome, the tip of the beta-hairpin is displaced, which severely restricts the tunnel. This and experiments in E.coli have led to the suggestion that it is part of the gating mechanism involved in translation arrest in the absence of the protein export system. This Deinococcus radiodurans (strain ATCC 13939 / DSM 20539 / JCM 16871 / CCUG 27074 / LMG 4051 / NBRC 15346 / NCIMB 9279 / VKM B-1422 / R1) protein is Large ribosomal subunit protein uL22 (rplV).